The primary structure comprises 196 residues: ATP-dependent Clp protease proteolytic subunit 1 (196 aa).

The active-site Nucleophile is serine 96. Residue histidine 121 is part of the active site.

Belongs to the peptidase S14 family. Fourteen ClpP subunits assemble into 2 heptameric rings which stack back to back to give a disk-like structure with a central cavity, resembling the structure of eukaryotic proteasomes.

The protein resides in the cytoplasm. The enzyme catalyses Hydrolysis of proteins to small peptides in the presence of ATP and magnesium. alpha-casein is the usual test substrate. In the absence of ATP, only oligopeptides shorter than five residues are hydrolyzed (such as succinyl-Leu-Tyr-|-NHMec, and Leu-Tyr-Leu-|-Tyr-Trp, in which cleavage of the -Tyr-|-Leu- and -Tyr-|-Trp bonds also occurs).. Cleaves peptides in various proteins in a process that requires ATP hydrolysis. Has a chymotrypsin-like activity. Plays a major role in the degradation of misfolded proteins. This Prochlorococcus marinus (strain SARG / CCMP1375 / SS120) protein is ATP-dependent Clp protease proteolytic subunit 1.